Here is a 378-residue protein sequence, read N- to C-terminus: Erythronate-4-phosphate dehydrogenase (378 aa).

Residues S45 and T66 each coordinate substrate. Residues D146 and T175 each coordinate NAD(+). Residue R208 is part of the active site. NAD(+) is bound at residue D232. E237 is a catalytic residue. H254 serves as the catalytic Proton donor. G257 contributes to the NAD(+) binding site. Substrate is bound at residue Y258.

This sequence belongs to the D-isomer specific 2-hydroxyacid dehydrogenase family. PdxB subfamily. Homodimer.

Its subcellular location is the cytoplasm. The enzyme catalyses 4-phospho-D-erythronate + NAD(+) = (R)-3-hydroxy-2-oxo-4-phosphooxybutanoate + NADH + H(+). It participates in cofactor biosynthesis; pyridoxine 5'-phosphate biosynthesis; pyridoxine 5'-phosphate from D-erythrose 4-phosphate: step 2/5. Catalyzes the oxidation of erythronate-4-phosphate to 3-hydroxy-2-oxo-4-phosphonooxybutanoate. The chain is Erythronate-4-phosphate dehydrogenase from Salmonella paratyphi A (strain ATCC 9150 / SARB42).